We begin with the raw amino-acid sequence, 317 residues long: Aspartate carbamoyltransferase catalytic subunit (317 aa).

Residues arginine 65 and threonine 66 each coordinate carbamoyl phosphate. Position 93 (lysine 93) interacts with L-aspartate. Carbamoyl phosphate is bound by residues arginine 115, histidine 145, and glutamine 148. The L-aspartate site is built by arginine 178 and arginine 233. Glycine 274 and proline 275 together coordinate carbamoyl phosphate.

Belongs to the aspartate/ornithine carbamoyltransferase superfamily. ATCase family. Heterododecamer (2C3:3R2) of six catalytic PyrB chains organized as two trimers (C3), and six regulatory PyrI chains organized as three dimers (R2).

It carries out the reaction carbamoyl phosphate + L-aspartate = N-carbamoyl-L-aspartate + phosphate + H(+). It functions in the pathway pyrimidine metabolism; UMP biosynthesis via de novo pathway; (S)-dihydroorotate from bicarbonate: step 2/3. Catalyzes the condensation of carbamoyl phosphate and aspartate to form carbamoyl aspartate and inorganic phosphate, the committed step in the de novo pyrimidine nucleotide biosynthesis pathway. In Methylobacillus flagellatus (strain ATCC 51484 / DSM 6875 / VKM B-1610 / KT), this protein is Aspartate carbamoyltransferase catalytic subunit.